Here is a 243-residue protein sequence, read N- to C-terminus: Histone H2B.2 (243 aa).

A N,N,N-trimethylalanine; alternate modification is found at alanine 2. N,N-dimethylalanine; alternate is present on alanine 2. Alanine 2 bears the N-methylalanine; alternate mark. Positions 67–145 are disordered; the sequence is PDERSLPVGE…KKKKKKKRDD (79 aa). Over residues 120–132 the composition is skewed to basic and acidic residues; sequence GTLKKTDKVEKKQ. Residues 133–142 show a composition bias toward basic residues; the sequence is ENKKKKKKKK.

The protein belongs to the histone H2B family. The nucleosome is a histone octamer containing two molecules each of H2A, H2B, H3 and H4 assembled in one H3-H4 heterotetramer and two H2A-H2B heterodimers. The octamer wraps approximately 147 bp of DNA. Can be acetylated to form H2BK6ac.

The protein localises to the nucleus. The protein resides in the chromosome. In terms of biological role, core component of nucleosome. Nucleosomes wrap and compact DNA into chromatin, limiting DNA accessibility to the cellular machineries which require DNA as a template. Histones thereby play a central role in transcription regulation, DNA repair, DNA replication and chromosomal stability. DNA accessibility is regulated via a complex set of post-translational modifications of histones, also called histone code, and nucleosome remodeling. This Arabidopsis thaliana (Mouse-ear cress) protein is Histone H2B.2.